A 131-amino-acid chain; its full sequence is Glycine cleavage system H protein (131 aa).

Positions 24-106 (RAIVGVSDHA…YGEGWIMVIE (83 aa)) constitute a Lipoyl-binding domain. At lysine 65 the chain carries N6-lipoyllysine.

It belongs to the GcvH family. As to quaternary structure, the glycine cleavage system is composed of four proteins: P, T, L and H. It depends on (R)-lipoate as a cofactor.

Functionally, the glycine cleavage system catalyzes the degradation of glycine. The H protein shuttles the methylamine group of glycine from the P protein to the T protein. This chain is Glycine cleavage system H protein, found in Xylella fastidiosa (strain Temecula1 / ATCC 700964).